We begin with the raw amino-acid sequence, 218 residues long: Probable 1-Cys peroxiredoxin (218 aa).

The region spanning 5–166 is the Thioredoxin domain; the sequence is WALGDLVPDI…VLRVLDSLQL (162 aa). The active-site Cysteine sulfenic acid (-SOH) intermediate is the Cys-47.

This sequence belongs to the peroxiredoxin family. Prx6 subfamily.

The protein localises to the nucleus. It is found in the cytoplasm. The catalysed reaction is a hydroperoxide + [thioredoxin]-dithiol = an alcohol + [thioredoxin]-disulfide + H2O. Functionally, thiol-specific peroxidase that catalyzes the reduction of hydrogen peroxide and organic hydroperoxides to water and alcohols, respectively. Seems to contribute to the inhibition of germination during stress. Associated with the rehydration events involved in the recovery of the desiccation-tolerant moss. The polypeptide is Probable 1-Cys peroxiredoxin (Syntrichia ruralis (Great hairy screw-moss)).